Consider the following 187-residue polypeptide: Pyridoxal 5'-phosphate synthase subunit PdxT (187 aa).

47–49 contributes to the L-glutamine binding site; that stretch reads GES. C76 (nucleophile) is an active-site residue. Residues R102 and 128 to 129 each bind L-glutamine; that span reads IR. Catalysis depends on charge relay system residues H165 and E167.

The protein belongs to the glutaminase PdxT/SNO family. As to quaternary structure, in the presence of PdxS, forms a dodecamer of heterodimers. Only shows activity in the heterodimer.

It carries out the reaction aldehydo-D-ribose 5-phosphate + D-glyceraldehyde 3-phosphate + L-glutamine = pyridoxal 5'-phosphate + L-glutamate + phosphate + 3 H2O + H(+). It catalyses the reaction L-glutamine + H2O = L-glutamate + NH4(+). It participates in cofactor biosynthesis; pyridoxal 5'-phosphate biosynthesis. Functionally, catalyzes the hydrolysis of glutamine to glutamate and ammonia as part of the biosynthesis of pyridoxal 5'-phosphate. The resulting ammonia molecule is channeled to the active site of PdxS. The sequence is that of Pyridoxal 5'-phosphate synthase subunit PdxT from Methanococcus maripaludis (strain C7 / ATCC BAA-1331).